A 480-amino-acid polypeptide reads, in one-letter code: UDP-glucose 6-dehydrogenase 4 (480 aa).

NAD(+) contacts are provided by residues 3–20 (KICC…MAVI), aspartate 33, arginine 38, threonine 90, threonine 128, and glutamate 161. Residues 157 to 161 (EFLAE), lysine 216, 216 to 223 (KLAANAFL), 256 to 269 (RIGS…VGFG), and glycine 269 each bind substrate. Cysteine 272 functions as the Nucleophile in the catalytic mechanism. Residue lysine 275 participates in NAD(+) binding. Phenylalanine 334 and lysine 335 together coordinate substrate. Arginine 342 provides a ligand contact to NAD(+). Arginine 447 is a binding site for substrate.

This sequence belongs to the UDP-glucose/GDP-mannose dehydrogenase family.

The enzyme catalyses UDP-alpha-D-glucose + 2 NAD(+) + H2O = UDP-alpha-D-glucuronate + 2 NADH + 3 H(+). The protein operates within nucleotide-sugar biosynthesis; UDP-alpha-D-glucuronate biosynthesis; UDP-alpha-D-glucuronate from UDP-alpha-D-glucose: step 1/1. Inhibited by UDP-xylose. Functionally, involved in the biosynthesis of UDP-glucuronic acid (UDP-GlcA), providing nucleotide sugars for cell-wall polymers. This is UDP-glucose 6-dehydrogenase 4 from Arabidopsis thaliana (Mouse-ear cress).